The chain runs to 223 residues: Sigma non-opioid intracellular receptor 1 (223 aa).

Topologically, residues 1 to 9 (MQWAVGRRW) are lumenal. The interval 2 to 8 (QWAVGRR) is targeting to endoplasmic reticulum-associated lipid droplets. A helical membrane pass occupies residues 10–30 (AWAALLLAVAAVLTQVVWLWL). At 31–223 (GTQSFVFQRE…LTTYLFGQDP (193 aa)) the chain is on the cytoplasmic side. The segment at 99 to 106 (SLSEYVLL) is important for ligand-binding. The interval 177–223 (VIPSTLAFALADTVFSTQDFLTLFYTLRSYARGLRLELTTYLFGQDP) is C-terminal hydrophobic region.

This sequence belongs to the ERG2 family. As to quaternary structure, homotrimer. Forms a ternary complex with ANK2 and ITPR3. The complex is disrupted by agonists. Interacts with KCNA4. Interacts with KCNA2; cocaine consumption leads to increased interaction. Interacts with RNF112 in an oxidative stress-regulated manner. In terms of tissue distribution, widely expressed with higher expression in liver, colon, prostate, placenta, small intestine, heart and pancreas. Expressed in the retina by retinal pigment epithelial cells. Expressed in alpha-motor neurons.

The protein localises to the nucleus inner membrane. It localises to the nucleus outer membrane. Its subcellular location is the nucleus envelope. It is found in the cytoplasmic vesicle. The protein resides in the endoplasmic reticulum membrane. The protein localises to the membrane. It localises to the lipid droplet. Its subcellular location is the cell junction. It is found in the cell membrane. The protein resides in the cell projection. The protein localises to the growth cone. It localises to the postsynaptic density membrane. Functionally, functions in lipid transport from the endoplasmic reticulum and is involved in a wide array of cellular functions probably through regulation of the biogenesis of lipid microdomains at the plasma membrane. Involved in the regulation of different receptors it plays a role in BDNF signaling and EGF signaling. Also regulates ion channels like the potassium channel and could modulate neurotransmitter release. Plays a role in calcium signaling through modulation together with ANK2 of the ITP3R-dependent calcium efflux at the endoplasmic reticulum. Plays a role in several other cell functions including proliferation, survival and death. Originally identified for its ability to bind various psychoactive drugs it is involved in learning processes, memory and mood alteration. Necessary for proper mitochondrial axonal transport in motor neurons, in particular the retrograde movement of mitochondria. Plays a role in protecting cells against oxidative stress-induced cell death via its interaction with RNF112. The protein is Sigma non-opioid intracellular receptor 1 (SIGMAR1) of Homo sapiens (Human).